The chain runs to 94 residues: Acylphosphatase (94 aa).

The 88-residue stretch at 7–94 (AALVRITGRV…EAPAGFRITR (88 aa)) folds into the Acylphosphatase-like domain. Active-site residues include Arg22 and Asn40.

Belongs to the acylphosphatase family.

The catalysed reaction is an acyl phosphate + H2O = a carboxylate + phosphate + H(+). The polypeptide is Acylphosphatase (acyP) (Sinorhizobium medicae (strain WSM419) (Ensifer medicae)).